The primary structure comprises 352 residues: Alanine racemase (352 aa).

K33 (proton acceptor; specific for D-alanine) is an active-site residue. K33 bears the N6-(pyridoxal phosphate)lysine mark. R129 contacts substrate. Residue Y250 is the Proton acceptor; specific for L-alanine of the active site. M298 is a substrate binding site.

The protein belongs to the alanine racemase family. Requires pyridoxal 5'-phosphate as cofactor.

It carries out the reaction L-alanine = D-alanine. Its pathway is amino-acid biosynthesis; D-alanine biosynthesis; D-alanine from L-alanine: step 1/1. Functionally, catalyzes the interconversion of L-alanine and D-alanine. May also act on other amino acids. The sequence is that of Alanine racemase (alr) from Neisseria gonorrhoeae (strain ATCC 700825 / FA 1090).